Here is a 143-residue protein sequence, read N- to C-terminus: Nucleoside diphosphate kinase (143 aa).

Positions 11, 59, 87, 93, 104, and 114 each coordinate ATP. Histidine 117 functions as the Pros-phosphohistidine intermediate in the catalytic mechanism.

This sequence belongs to the NDK family. In terms of assembly, homotetramer. Requires Mg(2+) as cofactor.

The protein localises to the cytoplasm. It carries out the reaction a 2'-deoxyribonucleoside 5'-diphosphate + ATP = a 2'-deoxyribonucleoside 5'-triphosphate + ADP. It catalyses the reaction a ribonucleoside 5'-diphosphate + ATP = a ribonucleoside 5'-triphosphate + ADP. Its function is as follows. Major role in the synthesis of nucleoside triphosphates other than ATP. The ATP gamma phosphate is transferred to the NDP beta phosphate via a ping-pong mechanism, using a phosphorylated active-site intermediate. In Edwardsiella ictaluri (strain 93-146), this protein is Nucleoside diphosphate kinase.